Here is a 299-residue protein sequence, read N- to C-terminus: Homeobox protein ceh-24 (299 aa).

Positions 1–35 (MSEKETPSPVLDVKKEKNEETGIDEEKSSEDDCSK) are enriched in basic and acidic residues. 2 disordered regions span residues 1 to 45 (MSEK…NPSK) and 208 to 263 (QEKE…SGVF). A DNA-binding region (homeobox) is located at residues 150–209 (RRKRRVLFSQAQVYELERRFKQAKYLTAPEREQLANSIRLTPTQVKIWFQNHRYKCKRQE). Over residues 242–252 (DDKDDEEEEES) the composition is skewed to acidic residues.

Belongs to the NK-2 homeobox family. In terms of tissue distribution, expressed in the 8 vulval muscles, 8-10 ventral neurons in the head and in the most posterior pharyngeal muscle cell, m8. Expressed in SIA, SIB and SMB sublateral motor neurons, and in muscles of the pharynx and vulva.

The protein localises to the nucleus. Functionally, probable transcriptional regulator that is required in neural development for the normal formation of sublateral cholinergic motor neuron processes. Plays a role in regulating the expression of acetylcholine transporter protein unc-17 in the sublateral processes. In particular, it is required in sublateral motor neurons for a left-right turning behavior that occurs during the lethargus phase of the normal sleep process called 'flipping'. During 'flipping' animals rotate 180 degrees about their longitudinal axis. This Caenorhabditis elegans protein is Homeobox protein ceh-24.